The following is a 199-amino-acid chain: Recombination protein RecR (199 aa).

The C4-type zinc-finger motif lies at C57–C72. In terms of domain architecture, Toprim spans S80–P175.

The protein belongs to the RecR family.

May play a role in DNA repair. It seems to be involved in an RecBC-independent recombinational process of DNA repair. It may act with RecF and RecO. This chain is Recombination protein RecR, found in Rickettsia prowazekii (strain Madrid E).